Consider the following 148-residue polypeptide: NADPH-dependent 7-cyano-7-deazaguanine reductase (148 aa).

Catalysis depends on C50, which acts as the Thioimide intermediate. Residue D57 is the Proton donor of the active site. Residues 72–74 and 91–92 each bind substrate; these read VES and HE.

It belongs to the GTP cyclohydrolase I family. QueF type 1 subfamily.

It localises to the cytoplasm. It catalyses the reaction 7-aminomethyl-7-carbaguanine + 2 NADP(+) = 7-cyano-7-deazaguanine + 2 NADPH + 3 H(+). The protein operates within tRNA modification; tRNA-queuosine biosynthesis. Its function is as follows. Catalyzes the NADPH-dependent reduction of 7-cyano-7-deazaguanine (preQ0) to 7-aminomethyl-7-deazaguanine (preQ1). The protein is NADPH-dependent 7-cyano-7-deazaguanine reductase of Helicobacter pylori (strain P12).